A 212-amino-acid polypeptide reads, in one-letter code: Guanylate kinase (212 aa).

Positions 14–192 (GTALVICAPS…AYDELRATYL (179 aa)) constitute a Guanylate kinase-like domain. 21–28 (APSGTGKT) provides a ligand contact to ATP.

This sequence belongs to the guanylate kinase family.

It localises to the cytoplasm. The enzyme catalyses GMP + ATP = GDP + ADP. Its function is as follows. Essential for recycling GMP and indirectly, cGMP. The chain is Guanylate kinase from Lawsonia intracellularis (strain PHE/MN1-00).